Consider the following 607-residue polypeptide: Proteasome-associated ATPase (607 aa).

The segment covering 1-17 (MTESDRHDTPKGDRRIS) has biased composition (basic and acidic residues). The segment at 1–65 (MTESDRHDTP…GRPAADNKEL (65 aa)) is disordered. The stretch at 59–102 (AADNKELQERVDNLTARNAKLLDTLKDARQQLVALREEVDRLGQ) forms a coiled coil. ATP is bound at residue 294–299 (GCGKTL). The docks into pockets in the proteasome alpha-ring stretch occupies residues 606-607 (YL).

It belongs to the AAA ATPase family. As to quaternary structure, homohexamer. Assembles into a hexameric ring structure that caps the 20S proteasome core. Strongly interacts with the prokaryotic ubiquitin-like protein Pup through a hydrophobic interface; the interacting region of ARC lies in its N-terminal coiled-coil domain. There is one Pup binding site per ARC hexamer ring. Upon ATP-binding, the C-terminus of ARC interacts with the alpha-rings of the proteasome core, possibly by binding to the intersubunit pockets.

It functions in the pathway protein degradation; proteasomal Pup-dependent pathway. ATPase which is responsible for recognizing, binding, unfolding and translocation of pupylated proteins into the bacterial 20S proteasome core particle. May be essential for opening the gate of the 20S proteasome via an interaction with its C-terminus, thereby allowing substrate entry and access to the site of proteolysis. Thus, the C-termini of the proteasomal ATPase may function like a 'key in a lock' to induce gate opening and therefore regulate proteolysis. The chain is Proteasome-associated ATPase from Gordonia bronchialis (strain ATCC 25592 / DSM 43247 / BCRC 13721 / JCM 3198 / KCTC 3076 / NBRC 16047 / NCTC 10667) (Rhodococcus bronchialis).